A 355-amino-acid chain; its full sequence is 3-isopropylmalate dehydrogenase (355 aa).

4 residues coordinate substrate: arginine 98, arginine 108, arginine 132, and aspartate 223. The Mg(2+) site is built by aspartate 223, aspartate 247, and aspartate 251. 283 to 295 (GSAPDIAGQQKAD) provides a ligand contact to NAD(+).

This sequence belongs to the isocitrate and isopropylmalate dehydrogenases family. LeuB type 2 subfamily. As to quaternary structure, homodimer. The cofactor is Mg(2+). Mn(2+) serves as cofactor.

The protein resides in the cytoplasm. It catalyses the reaction (2R,3S)-3-isopropylmalate + NAD(+) = 4-methyl-2-oxopentanoate + CO2 + NADH. It participates in amino-acid biosynthesis; L-leucine biosynthesis; L-leucine from 3-methyl-2-oxobutanoate: step 3/4. Catalyzes the oxidation of 3-carboxy-2-hydroxy-4-methylpentanoate (3-isopropylmalate) to 3-carboxy-4-methyl-2-oxopentanoate. The product decarboxylates to 4-methyl-2 oxopentanoate. In Clavibacter michiganensis subsp. michiganensis (strain NCPPB 382), this protein is 3-isopropylmalate dehydrogenase.